An 82-amino-acid chain; its full sequence is Turripeptide Gdm9.1 (82 aa).

The signal sequence occupies residues 1–23; sequence MMAKLMITVMMVLLLSLQQGADG. A propeptide spanning residues 24–46 is cleaved from the precursor; the sequence is RSERWRKNQMAASRIMRNLITAR. 4-hydroxyproline occurs at positions 49 and 50. 3 disulfides stabilise this stretch: cysteine 53–cysteine 68, cysteine 58–cysteine 72, and cysteine 64–cysteine 79. 2 positions are modified to 4-carboxyglutamate: glutamate 60 and glutamate 63.

It belongs to the Pg turripeptide superfamily. In terms of tissue distribution, expressed by the venom duct.

The protein resides in the secreted. This Gemmula diomedea (Gem-turris) protein is Turripeptide Gdm9.1.